The following is a 299-amino-acid chain: Taste receptor type 2 member 5 (299 aa).

Residue methionine 1 is a topological domain, extracellular. Residues 2-22 (LSAGLGLLMLVAVVEFLIGLI) traverse the membrane as a helical segment. Residues 23–45 (GNGVLVVWSFREWIRKFSWSSYN) lie on the Cytoplasmic side of the membrane. A helical transmembrane segment spans residues 46–66 (LIILGLAGCRFVLQWLIILDL). The Extracellular segment spans residues 67 to 82 (SLFPLFQSSRWLRYLS). Residues 83 to 103 (IFWVLVSQASLWFATFLSVFY) form a helical membrane-spanning segment. The Cytoplasmic portion of the chain corresponds to 104–127 (CKKITTFDHPAYLWLKQRAYNLSL). The helical transmembrane segment at 128–148 (WCLLGYFIINLLLTVQIGLMF) threads the bilayer. Topologically, residues 149–175 (YHPPQGNSSIRYPFESWQYLYAFRLNS) are extracellular. A glycan (N-linked (GlcNAc...) asparagine) is linked at asparagine 155. A helical transmembrane segment spans residues 176-196 (GSYLPLMVFLVSSGMLIVSLY). Residues 197–223 (THHKKMKVHSAGRRDVRAKAHITALKS) are Cytoplasmic-facing. Residues 224–244 (LGCFLLLHLVYIMASPFSIAS) form a helical membrane-spanning segment. The Extracellular portion of the chain corresponds to 245–253 (KTYPPDLTS). Residues 254–274 (VFIWETLMAAYPSLHSLILIM) traverse the membrane as a helical segment. Over 275–299 (GIPRVKQTCQKILWKTVCARRCWGP) the chain is Cytoplasmic.

This sequence belongs to the G-protein coupled receptor T2R family.

The protein resides in the membrane. Its function is as follows. Receptor that may play a role in the perception of bitterness and is gustducin-linked. May play a role in sensing the chemical composition of the gastrointestinal content. The activity of this receptor may stimulate alpha gustducin, mediate PLC-beta-2 activation and lead to the gating of TRPM5. The sequence is that of Taste receptor type 2 member 5 (TAS2R5) from Pan paniscus (Pygmy chimpanzee).